We begin with the raw amino-acid sequence, 138 residues long: Large ribosomal subunit protein uL16 (138 aa).

The span at 1 to 13 shows a compositional bias: basic residues; the sequence is MLQPARRKFRKEQ. A disordered region spans residues 1–22; that stretch reads MLQPARRKFRKEQKGRNTGLAT.

It belongs to the universal ribosomal protein uL16 family. In terms of assembly, part of the 50S ribosomal subunit.

In terms of biological role, binds 23S rRNA and is also seen to make contacts with the A and possibly P site tRNAs. This chain is Large ribosomal subunit protein uL16, found in Thiobacillus denitrificans (strain ATCC 25259 / T1).